Reading from the N-terminus, the 303-residue chain is AP2-like ethylene-responsive transcription factor At1g79700 (303 aa).

A compositionally biased stretch (basic residues) spans 1–10 (MAKVSGRSKK). Positions 1–55 (MAKVSGRSKKTIVDDEISDKTASASESASIALTSKRKRKSPPRNAPLQRSSPYRG) are disordered. Polar residues predominate over residues 20–32 (KTASASESASIAL). 2 DNA-binding regions (AP2/ERF) span residues 52 to 118 (PYRG…LNFP) and 154 to 202 (KYRG…TNFD). Positions 212–259 (AADKADSDSKPIRSPSREPESSDDNKSPKSEEVIEPSTSPEVIPTRRS) are disordered. A compositionally biased stretch (basic and acidic residues) spans 214-243 (DKADSDSKPIRSPSREPESSDDNKSPKSEE).

This sequence belongs to the AP2/ERF transcription factor family. AP2 subfamily.

It localises to the nucleus. In terms of biological role, probably acts as a transcriptional activator. Binds to the GCC-box pathogenesis-related promoter element. May be involved in the regulation of gene expression by stress factors and by components of stress signal transduction pathways. The protein is AP2-like ethylene-responsive transcription factor At1g79700 of Arabidopsis thaliana (Mouse-ear cress).